Here is a 326-residue protein sequence, read N- to C-terminus: Eukaryotic translation initiation factor 3 subunit I (326 aa).

5 WD repeats span residues 8–47, 50–89, 145–184, 188–227, and 285–326; these read GHERSITQIKYNREGDLLFSCSKDQKPNVWYSLNGERLGT, GHQGAVWCLDVDWESRKLITGAGDMTTKLWDVEYGTIIAS, MTESKITSMQWGPLDETIITGHDNGNIAIWDVRKGQKVVD, DHAAGINDMQLSKDGTMFVTASRDTTAKLFDSESLMCLKT, and GHFG…NIFE.

This sequence belongs to the eIF-3 subunit I family. As to quaternary structure, component of the eukaryotic translation initiation factor 3 (eIF-3) complex. The eIF-3 complex interacts with pix.

The protein resides in the cytoplasm. In terms of biological role, component of the eukaryotic translation initiation factor 3 (eIF-3) complex, which is involved in protein synthesis of a specialized repertoire of mRNAs and, together with other initiation factors, stimulates binding of mRNA and methionyl-tRNAi to the 40S ribosome. The eIF-3 complex specifically targets and initiates translation of a subset of mRNAs involved in cell proliferation. In Drosophila pseudoobscura pseudoobscura (Fruit fly), this protein is Eukaryotic translation initiation factor 3 subunit I.